The chain runs to 197 residues: Phosphoheptose isomerase (197 aa).

Positions methionine 36 to glutamate 197 constitute an SIS domain. Substrate is bound at residue asparagine 51 to glycine 53. Zn(2+)-binding residues include histidine 60 and glutamate 64. Substrate-binding positions include glutamate 64, asparagine 93 to aspartate 94, serine 119 to serine 121, serine 124, and glutamine 174. Zn(2+)-binding residues include glutamine 174 and histidine 182.

Belongs to the SIS family. GmhA subfamily. Homotetramer. Requires Zn(2+) as cofactor.

It is found in the cytoplasm. The catalysed reaction is 2 D-sedoheptulose 7-phosphate = D-glycero-alpha-D-manno-heptose 7-phosphate + D-glycero-beta-D-manno-heptose 7-phosphate. The protein operates within carbohydrate biosynthesis; D-glycero-D-manno-heptose 7-phosphate biosynthesis; D-glycero-alpha-D-manno-heptose 7-phosphate and D-glycero-beta-D-manno-heptose 7-phosphate from sedoheptulose 7-phosphate: step 1/1. Catalyzes the isomerization of sedoheptulose 7-phosphate in D-glycero-D-manno-heptose 7-phosphate. This Pseudomonas aeruginosa (strain LESB58) protein is Phosphoheptose isomerase.